Consider the following 538-residue polypeptide: Anti-bacteriophage protein A (538 aa).

In terms of assembly, interacts with AbpB.

In terms of biological role, part of an antiviral system composed of AbpA and AbpB; when both are expressed from a plasmid they confer resistance to phages T2, T4, T7 and lambda but not RB32 or RB69. Resistance is temperature dependent, it can be seen at 30 degrees Celsius but not at 37 or 42 degrees Celsius. The system impairs phage but not bacterial DNA synthesis (shown for T4, T7 and lambda). Partially suppressed by mutations in T4 gene 41, a replicative helicase. This is Anti-bacteriophage protein A from Escherichia coli (strain K12).